The chain runs to 85 residues: Small ribosomal subunit protein uS17 (85 aa).

The protein belongs to the universal ribosomal protein uS17 family. Part of the 30S ribosomal subunit.

In terms of biological role, one of the primary rRNA binding proteins, it binds specifically to the 5'-end of 16S ribosomal RNA. The chain is Small ribosomal subunit protein uS17 from Lachnospira eligens (strain ATCC 27750 / DSM 3376 / VPI C15-48 / C15-B4) (Eubacterium eligens).